Reading from the N-terminus, the 479-residue chain is tRNA-dihydrouridine(20) synthase [NAD(P)+] (479 aa).

FMN contacts are provided by residues 14–16 (PMV) and Gln-87. Residue Cys-116 is the Proton donor of the active site. FMN-binding positions include Lys-159, His-187, 221–223 (NGD), and 245–246 (AR).

This sequence belongs to the Dus family. Dus2 subfamily. FMN serves as cofactor.

The protein resides in the cytoplasm. The protein localises to the nucleus. The enzyme catalyses 5,6-dihydrouridine(20) in tRNA + NADP(+) = uridine(20) in tRNA + NADPH + H(+). It carries out the reaction 5,6-dihydrouridine(20) in tRNA + NAD(+) = uridine(20) in tRNA + NADH + H(+). The catalysed reaction is a 5,6-dihydrouridine in mRNA + NAD(+) = a uridine in mRNA + NADH + H(+). It catalyses the reaction a 5,6-dihydrouridine in mRNA + NADP(+) = a uridine in mRNA + NADPH + H(+). Catalyzes the NADPH-dependent synthesis of dihydrouridine, a modified base found in the D-loop of most tRNAs. Specifically modifies U20 in cytoplasmic tRNAs. Also able to mediate dihydrouridylation of some mRNAs, thereby affecting their translation. The protein is tRNA-dihydrouridine(20) synthase [NAD(P)+] of Schizosaccharomyces pombe (strain 972 / ATCC 24843) (Fission yeast).